Here is a 245-residue protein sequence, read N- to C-terminus: Polyhedrin (245 aa).

It belongs to the polyhedrin family.

In terms of biological role, major component of the virus occlusion bodies, which are large proteinaceous structures (polyhedra), that protect the virus from the outside environment for extended periods until they are ingested by insect larvae. The sequence is that of Polyhedrin (PH) from Orgyia pseudotsugata multicapsid polyhedrosis virus (OpMNPV).